The primary structure comprises 167 residues: Zinc finger CCCH domain-containing protein 3 (167 aa).

A C3H1-type zinc finger spans residues 63 to 91 (AAAIGVCQHFVRTGTCKFGDSCRYFHPKP). A compositionally biased stretch (pro residues) spans 89-101 (PKPPPANPGPAPS). The tract at residues 89–167 (PKPPPANPGP…YPPFPFVDWG (79 aa)) is disordered. The span at 108-120 (MAQQSNIQGSQPN) shows a compositional bias: polar residues. Residues 149-167 (SLRPPPEGGYPPFPFVDWG) are compositionally biased toward pro residues.

The sequence is that of Zinc finger CCCH domain-containing protein 3 from Oryza sativa subsp. japonica (Rice).